Consider the following 106-residue polypeptide: Trp operon repressor homolog (106 aa).

Residues 59–82 (QREIQQILNTSAATITRGSNMIKI) mediate DNA binding.

The protein belongs to the TrpR family. As to quaternary structure, homodimer.

Its subcellular location is the cytoplasm. Functionally, this protein is an aporepressor. When complexed with L-tryptophan it binds the operator region of the trp operon and prevents the initiation of transcription. This chain is Trp operon repressor homolog, found in Histophilus somni (strain 129Pt) (Haemophilus somnus).